The chain runs to 414 residues: Na(+)-translocating NADH-quinone reductase subunit B (414 aa).

The next 4 helical transmembrane spans lie at 23–40 (WFAL…PGLV), 56–76 (IMIM…YNAG), 129–149 (FLPI…LFCM), and 164–184 (ILFA…LGIT). Position 236 is an FMN phosphoryl threonine (threonine 236). The next 5 membrane-spanning stretches (helical) occupy residues 268-288 (IPGS…AMIV), 297-317 (IIAG…VIGS), 322-342 (MFSM…GMFF), 358-378 (WWYG…NPAY), and 381-401 (GMML…HLVV).

This sequence belongs to the NqrB/RnfD family. As to quaternary structure, composed of six subunits; NqrA, NqrB, NqrC, NqrD, NqrE and NqrF. FMN serves as cofactor.

It is found in the cell inner membrane. It carries out the reaction a ubiquinone + n Na(+)(in) + NADH + H(+) = a ubiquinol + n Na(+)(out) + NAD(+). In terms of biological role, NQR complex catalyzes the reduction of ubiquinone-1 to ubiquinol by two successive reactions, coupled with the transport of Na(+) ions from the cytoplasm to the periplasm. NqrA to NqrE are probably involved in the second step, the conversion of ubisemiquinone to ubiquinol. In Vibrio vulnificus (strain CMCP6), this protein is Na(+)-translocating NADH-quinone reductase subunit B.